The chain runs to 102 residues: Thioredoxin (102 aa).

Residues 2-102 (VTEIRSLKQL…KTKIIDLFNN (101 aa)) form the Thioredoxin domain. Residues Cys-30 and Cys-33 are joined by a disulfide bond.

The protein belongs to the thioredoxin family.

In terms of biological role, participates in various redox reactions through the reversible oxidation of its active center dithiol to a disulfide and catalyzes dithiol-disulfide exchange reactions. This is Thioredoxin (trxA) from Mycoplasma genitalium (strain ATCC 33530 / DSM 19775 / NCTC 10195 / G37) (Mycoplasmoides genitalium).